Reading from the N-terminus, the 475-residue chain is 7-dehydrocholesterol reductase (475 aa).

Residues 1-21 form a disordered region; it reads MAAKSQPSAPKTKSTSGLTNG. The residue at position 14 (serine 14) is a Phosphoserine. 6 helical membrane-spanning segments follow: residues 40 to 60, 151 to 173, 178 to 200, 266 to 286, 306 to 326, and 331 to 351; these read LASVIFLLLFAPFIVYYFIMA, WLLTHLLWFANAHLLGWFSPTII, IPLLWCANILGYTVSTFAMVKGY, VTNSMVLVNILQAIYVLDFFW, LGWGDCVWLPYLYTLQGLYLV, and QLPTYYALGVLLLGLLGYYIF. Residues lysine 358, arginine 362, leucine 395, tryptophan 400, and 407–408 each bind NADP(+); that span reads NY. A helical transmembrane segment spans residues 420–440; sequence LACGGGHLLPYFYIIFMAILL. Residues aspartate 447, 451-455, and tyrosine 462 contribute to the NADP(+) site; that span reads CANKY.

Belongs to the ERG4/ERG24 family. As to quaternary structure, interacts with DHCR24; this interaction regulates DHCR7 activity. Interacts with TMEM147.

Its subcellular location is the endoplasmic reticulum membrane. It catalyses the reaction cholesterol + NADP(+) = 7-dehydrocholesterol + NADPH + H(+). It carries out the reaction 7-dehydrodesmosterol + NADPH + H(+) = desmosterol + NADP(+). The catalysed reaction is 5,6alpha-epoxy-5alpha-cholestan-3beta-ol + H2O = 5alpha-cholestane-3beta,5,6beta-triol. The enzyme catalyses 5,6beta-epoxy-5beta-cholestan-3beta-ol + H2O = 5alpha-cholestane-3beta,5,6beta-triol. It participates in steroid biosynthesis; cholesterol biosynthesis. Its function is as follows. Oxidoreductase that catalyzes the last step of the cholesterol synthesis pathway, which transforms cholesta-5,7-dien-3beta-ol (7-dehydrocholesterol,7-DHC) into cholesterol by reducing the C7-C8 double bond of its sterol core. Can also metabolize cholesta-5,7,24-trien-3beta-ol (7-dehydrodemosterol, 7-DHD) to desmosterol, which is then metabolized by the Delta(24)-sterol reductase (DHCR24) to cholesterol. Modulates ferroptosis (a form of regulated cell death driven by iron-dependent lipid peroxidation) through the metabolic breakdown of the anti-ferroptotic metabolites 7-DHC and 7-DHD which, when accumulated, divert the propagation of peroxyl radical-mediated damage from phospholipid components to its sterol core, protecting plasma and mitochondrial membranes from phospholipid autoxidation. Functionally, component of the microsomal antiestrogen binding site (AEBS), a multiproteic complex at the ER membrane that consists of an association between cholestenol Delta-isomerase/EBP and DHCR7. This complex is responsible for cholesterol-5,6-epoxide hydrolase (ChEH) activity, which consists in the hydration of cholesterol-5,6-epoxides (5,6-EC) into cholestane-3beta,5alpha,6beta-triol (CT). The precise role of each component of this complex has not been described yet. This chain is 7-dehydrocholesterol reductase (DHCR7), found in Bos taurus (Bovine).